Here is a 491-residue protein sequence, read N- to C-terminus: Glutamate--tRNA ligase (491 aa).

The short motif at 12–22 (PSPTGTPHVGL) is the 'HIGH' region element. Residues 111–134 (STPEEVEERHKAAGRDPKLGYDNF) form a disordered region. The segment covering 117 to 134 (EERHKAAGRDPKLGYDNF) has biased composition (basic and acidic residues). The 'KMSKS' region motif lies at 256–260 (KLSKR). Lys259 is an ATP binding site.

The protein belongs to the class-I aminoacyl-tRNA synthetase family. Glutamate--tRNA ligase type 1 subfamily. In terms of assembly, monomer.

It localises to the cytoplasm. The catalysed reaction is tRNA(Glu) + L-glutamate + ATP = L-glutamyl-tRNA(Glu) + AMP + diphosphate. Functionally, catalyzes the attachment of glutamate to tRNA(Glu) in a two-step reaction: glutamate is first activated by ATP to form Glu-AMP and then transferred to the acceptor end of tRNA(Glu). The chain is Glutamate--tRNA ligase from Rhodococcus jostii (strain RHA1).